Reading from the N-terminus, the 296-residue chain is Cutinase est1 (296 aa).

The first 35 residues, 1–35 (MSVTTPRREASLLSRAVAVAAAAAATVALAAPAQA), serve as a signal peptide directing secretion. The interval 36-57 (ANPYERGPNPTESMLEARSGPF) is disordered. Residue Tyr95 coordinates poly(ethylene terephthalate). Ser165 acts as the Nucleophile in catalysis. 2 residues coordinate poly(ethylene terephthalate): Met166 and Trp190. Active-site charge relay system residues include Asp211 and His243. A disulfide bridge connects residues Cys276 and Cys294.

It belongs to the AB hydrolase superfamily. Monomer.

Its subcellular location is the secreted. The protein resides in the periplasm. The catalysed reaction is (ethylene terephthalate)(n) + H2O = (ethylene terephthalate)(n-1) + 4-[(2-hydroxyethoxy)carbonyl]benzoate + H(+). It catalyses the reaction a butanoate ester + H2O = an aliphatic alcohol + butanoate + H(+). The enzyme catalyses cutin + H2O = cutin monomers.. Functionally, catalyzes the hydrolysis of cutin, a polyester that forms the structure of plant cuticle. Shows esterase activity towards p-nitrophenol-linked aliphatic esters (pNP-aliphatic esters). Capable of degrading the plastic poly(ethylene terephthalate) (PET), the most abundant polyester plastic in the world. Can also depolymerize the synthetic polyester poly(epsilon-caprolactone) (PCL). The sequence is that of Cutinase est1 from Thermobifida alba (Thermomonospora alba).